The chain runs to 149 residues: Large ribosomal subunit protein uL22c (149 aa).

This sequence belongs to the universal ribosomal protein uL22 family. As to quaternary structure, part of the 50S ribosomal subunit.

The protein resides in the plastid. Its subcellular location is the chloroplast. This protein binds specifically to 23S rRNA. Functionally, the globular domain of the protein is located near the polypeptide exit tunnel on the outside of the subunit, while an extended beta-hairpin is found that lines the wall of the exit tunnel in the center of the 70S ribosome. In Pelargonium hortorum (Common geranium), this protein is Large ribosomal subunit protein uL22c (rpl22-A).